The primary structure comprises 466 residues: Delta-1 crystallin (466 aa).

A2 is modified (blocked amino end (Ala)).

This sequence belongs to the lyase 1 family. Argininosuccinate lyase subfamily. As to quaternary structure, homotetramer. The N-terminus is blocked. As to expression, eye lens.

Its function is as follows. Delta crystallin, the principal crystallin in embryonic lens, is found only in birds and reptiles. In Gallus gallus (Chicken), this protein is Delta-1 crystallin (ASL1).